The following is a 215-amino-acid chain: LexA repressor (215 aa).

Residues 28–48 (RAEIAAELGFSSPNAAEEHLR) constitute a DNA-binding region (H-T-H motif). Active-site for autocatalytic cleavage activity residues include serine 133 and lysine 170.

It belongs to the peptidase S24 family. Homodimer.

It catalyses the reaction Hydrolysis of Ala-|-Gly bond in repressor LexA.. Functionally, represses a number of genes involved in the response to DNA damage (SOS response), including recA and lexA. In the presence of single-stranded DNA, RecA interacts with LexA causing an autocatalytic cleavage which disrupts the DNA-binding part of LexA, leading to derepression of the SOS regulon and eventually DNA repair. This Burkholderia cenocepacia (strain ATCC BAA-245 / DSM 16553 / LMG 16656 / NCTC 13227 / J2315 / CF5610) (Burkholderia cepacia (strain J2315)) protein is LexA repressor.